The chain runs to 167 residues: 16S rRNA aminocarboxypropyltransferase (167 aa).

Residues Thr17, Val62, Leu84, Tyr99, and Ser103 each contribute to the S-adenosyl-L-methionine site.

Belongs to the TDD superfamily. TSR3 family.

Its subcellular location is the cytoplasm. It carries out the reaction an N(1)-methylpseudouridine in rRNA + S-adenosyl-L-methionine = N(1)-methyl-N(3)-[(3S)-3-amino-3-carboxypropyl]pseudouridine in rRNA + S-methyl-5'-thioadenosine + H(+). In terms of biological role, aminocarboxypropyltransferase that catalyzes the aminocarboxypropyl transfer on pseudouridine corresponding to position 914 in M.jannaschii 16S rRNA. It constitutes the last step in biosynthesis of the hypermodified N1-methyl-N3-(3-amino-3-carboxypropyl) pseudouridine (m1acp3-Psi). The chain is 16S rRNA aminocarboxypropyltransferase from Sulfurisphaera tokodaii (strain DSM 16993 / JCM 10545 / NBRC 100140 / 7) (Sulfolobus tokodaii).